Reading from the N-terminus, the 814-residue chain is Protein fam-161 (814 aa).

A compositionally biased stretch (polar residues) spans 71–87 (ITQHRSSYKVTKSSSCH). Disordered stretches follow at residues 71 to 130 (ITQH…SWSQ), 150 to 255 (RHQV…ATSA), 569 to 610 (SRSK…THAT), and 714 to 814 (MKSA…SSEA). Over residues 99-111 (MPRHLDLKPRSSE) the composition is skewed to basic and acidic residues. Residues 174-193 (STAPSQVSVTSSVQSVAALS) are compositionally biased toward low complexity. 2 stretches are compositionally biased toward polar residues: residues 194–207 (GQNP…TPSH) and 216–235 (RTHQ…TLQN). Over residues 236–249 (PRHRTSSASRHHST) the composition is skewed to basic residues. Composition is skewed to polar residues over residues 570–583 (RSKS…NCQE) and 594–610 (ENLP…THAT). A coiled-coil region spans residues 606-689 (STHATQLREE…LAEMKQRVLN (84 aa)). Residues 714-727 (MKSAKGRGIERVQS) show a composition bias toward basic and acidic residues. The span at 728–745 (QEKQQSIGRRSSEVSGSG) shows a compositional bias: polar residues. Residues 751-765 (KGYEESFESEDKSEK) are compositionally biased toward basic and acidic residues. Low complexity-rich tracts occupy residues 766-779 (SGSS…SGSE) and 795-814 (SKST…SSEA).

It belongs to the FAM161 family. Expressed in amphid and phasmid ciliated neurons.

It localises to the cell projection. The protein resides in the cilium. Its subcellular location is the cytoplasm. It is found in the cytoskeleton. The protein localises to the cilium axoneme. This Caenorhabditis elegans protein is Protein fam-161.